Reading from the N-terminus, the 118-residue chain is V-type proton ATPase subunit G 1 (118 aa).

At Ala-2 the chain carries N-acetylalanine.

The protein belongs to the V-ATPase G subunit family. In terms of assembly, V-ATPase is a heteromultimeric enzyme made up of two complexes: the ATP-hydrolytic V1 complex and the proton translocation V0 complex. The V1 complex consists of three catalytic AB heterodimers that form a heterohexamer, three peripheral stalks each consisting of EG heterodimers, one central rotor including subunits D and F, and the regulatory subunits C and H. The proton translocation complex V0 consists of the proton transport subunit a, a ring of proteolipid subunits c9c'', rotary subunit d, subunits e and f, and the accessory subunits ATP6AP1/Ac45 and ATP6AP2/PRR. In terms of tissue distribution, kidney; localizes to early distal nephron, encompassing thick ascending limbs and distal convoluted tubules (at protein level). Ubiquitous.

Its subcellular location is the apical cell membrane. In terms of biological role, subunit of the V1 complex of vacuolar(H+)-ATPase (V-ATPase), a multisubunit enzyme composed of a peripheral complex (V1) that hydrolyzes ATP and a membrane integral complex (V0) that translocates protons. V-ATPase is responsible for acidifying and maintaining the pH of intracellular compartments and in some cell types, is targeted to the plasma membrane, where it is responsible for acidifying the extracellular environment. In aerobic conditions, involved in intracellular iron homeostasis, thus triggering the activity of Fe(2+) prolyl hydroxylase (PHD) enzymes, and leading to HIF1A hydroxylation and subsequent proteasomal degradation. The polypeptide is V-type proton ATPase subunit G 1 (ATP6V1G1) (Homo sapiens (Human)).